The following is a 748-amino-acid chain: Signal transducer and activator of transcription 4 (748 aa).

The SH2 domain occupies 569–664 (WIDGYVMGFV…ENPLKYLYPD (96 aa)). K667 carries the post-translational modification N6-acetyllysine. Phosphotyrosine; by JAK is present on Y693. Residue S721 is modified to Phosphoserine; by MAP2K6.

Belongs to the transcription factor STAT family. As to quaternary structure, forms a homodimer or a heterodimer with a related family member. Interacts with ARL2BP. The SH2 domain interacts, in vitro, with IL12RB2 via a short cytoplasmic domain. Interacts with STAT1. Interacts with JUN; this complex efficiently interacts with the AP-1-related sequence of the IFN-gamma. Acetylation at Lys-667 is required for JAK2-mediated phosphorylation and activation of STAT4. Post-translationally, tyrosine phosphorylated upon IL12 and IFN-alpha activation, but not by IFN-gamma in T-lymphocytes and NK cells. Serine phosphorylation is required for maximal transcriptional activity but not for DNA binding. Phosphorylation by MAP2K6 at Ser-721 is required for full transcriptional activity induced by IL12. However this serine phosphorylation is not required for cell proliferation although critical for IFN-gamma production.

The protein localises to the cytoplasm. It localises to the nucleus. Its function is as follows. Transcriptional regulator mainly expressed in hematopoietic cells that plays a critical role in cellular growth, differentiation and immune response. Plays a key role in the differentiation of T-helper 1 cells and the production of interferon-gamma. Also participates in multiple neutrophil functions including chemotaxis and production of the neutrophil extracellular traps. After IL12 binding to its receptor IL12RB2, STAT4 interacts with the intracellular domain of IL12RB2 and becomes tyrosine phosphorylated. Phosphorylated STAT4 then homodimerizes and migrates to the nucleus where it can recognize STAT target sequences present in IL12 responsive genes. Although IL12 appears to be the predominant activating signal, STAT4 can also be phosphorylated and activated in response to IFN-gamma stimulation via JAK1 and TYK2 and in response to different interleukins including IL23, IL2 and IL35. Transcription activation of IFN-gamma gene is mediated by interaction with JUN that forms a complex that efficiently interacts with the AP-1-related sequence of the IFN-gamma promoter. In response to IFN-alpha/beta signaling, acts as a transcriptional repressor and suppresses IL5 and IL13 mRNA expression during response to T-cell receptor (TCR) activation. The polypeptide is Signal transducer and activator of transcription 4 (STAT4) (Homo sapiens (Human)).